A 148-amino-acid chain; its full sequence is MELILLEKVANLGNLGDKVKVKAGYGRNFLLPFGKATVANAANLAAFEERRAELEKAAADKKASAESRAAQLAELEVTITATAGDEGKLFGSIGTHDIADALTASGVEVAKAEVRLPNGTIRQVGEYDVAVHLHSDVEATVRVVVVAA.

This sequence belongs to the bacterial ribosomal protein bL9 family.

In terms of biological role, binds to the 23S rRNA. The protein is Large ribosomal subunit protein bL9 of Pseudomonas putida (strain ATCC 700007 / DSM 6899 / JCM 31910 / BCRC 17059 / LMG 24140 / F1).